The primary structure comprises 525 residues: Chromosomal replication initiator protein DnaA (525 aa).

Positions 1–71 (MNDFWQHCSA…SDLAREFWNT (71 aa)) are domain I, interacts with DnaA modulators. The domain II stretch occupies residues 71–188 (TPIEVQFVLD…GEADSMYERS (118 aa)). Residues 162 to 182 (AGRRTWRPGPGAAPANGGEAD) are disordered. Residues 169–181 (PGPGAAPANGGEA) show a composition bias toward low complexity. The domain III, AAA+ region stretch occupies residues 189–405 (KLNPVLTFDN…GALRKILAYS (217 aa)). ATP-binding residues include Gly233, Gly235, Lys236, and Thr237. Positions 406 to 525 (KFHGREISIE…LHVLEQTLKG (120 aa)) are domain IV, binds dsDNA.

Belongs to the DnaA family. As to quaternary structure, oligomerizes as a right-handed, spiral filament on DNA at oriC.

The protein resides in the cytoplasm. Functionally, plays an essential role in the initiation and regulation of chromosomal replication. ATP-DnaA binds to the origin of replication (oriC) to initiate formation of the DNA replication initiation complex once per cell cycle. Binds the DnaA box (a 9 base pair repeat at the origin) and separates the double-stranded (ds)DNA. Forms a right-handed helical filament on oriC DNA; dsDNA binds to the exterior of the filament while single-stranded (ss)DNA is stabiized in the filament's interior. The ATP-DnaA-oriC complex binds and stabilizes one strand of the AT-rich DNA unwinding element (DUE), permitting loading of DNA polymerase. After initiation quickly degrades to an ADP-DnaA complex that is not apt for DNA replication. Binds acidic phospholipids. This is Chromosomal replication initiator protein DnaA from Burkholderia cenocepacia (strain HI2424).